We begin with the raw amino-acid sequence, 223 residues long: Putative 3-methyladenine DNA glycosylase (223 aa).

Belongs to the DNA glycosylase MPG family.

The chain is Putative 3-methyladenine DNA glycosylase from Pseudomonas syringae pv. tomato (strain ATCC BAA-871 / DC3000).